Here is a 276-residue protein sequence, read N- to C-terminus: Outer plastidial membrane protein porin (276 aa).

Belongs to the eukaryotic mitochondrial porin (TC 1.B.8.1) family.

It is found in the plastid outer membrane. Its function is as follows. Forms a channel through the cell membrane that allows diffusion of small hydrophilic molecules. The channel adopts an open conformation at low or zero membrane potential and a closed conformation at potentials above 30-40 mV. The open state has a weak anion selectivity whereas the closed state is cation-selective. This chain is Outer plastidial membrane protein porin (POR1), found in Pisum sativum (Garden pea).